The following is a 459-amino-acid chain: UDP-N-acetylmuramoylalanine--D-glutamate ligase (459 aa).

120–126 (GSNGKTT) provides a ligand contact to ATP.

The protein belongs to the MurCDEF family.

It is found in the cytoplasm. It catalyses the reaction UDP-N-acetyl-alpha-D-muramoyl-L-alanine + D-glutamate + ATP = UDP-N-acetyl-alpha-D-muramoyl-L-alanyl-D-glutamate + ADP + phosphate + H(+). It functions in the pathway cell wall biogenesis; peptidoglycan biosynthesis. In terms of biological role, cell wall formation. Catalyzes the addition of glutamate to the nucleotide precursor UDP-N-acetylmuramoyl-L-alanine (UMA). This Lactobacillus helveticus (strain DPC 4571) protein is UDP-N-acetylmuramoylalanine--D-glutamate ligase.